We begin with the raw amino-acid sequence, 64 residues long: Large ribosomal subunit protein bL35 (64 aa).

Over residues 1-26 (MPKMKSHRGASKRFKRTASGKLKRGR) the composition is skewed to basic residues. Disordered regions lie at residues 1–28 (MPKM…GRAY) and 33–52 (FGNK…MVSS).

Belongs to the bacterial ribosomal protein bL35 family.

This is Large ribosomal subunit protein bL35 from Exiguobacterium sibiricum (strain DSM 17290 / CCUG 55495 / CIP 109462 / JCM 13490 / 255-15).